The sequence spans 513 residues: ATP synthase subunit alpha (513 aa).

ATP is bound at residue 169-176 (GDRQTGKT).

The protein belongs to the ATPase alpha/beta chains family. In terms of assembly, F-type ATPases have 2 components, CF(1) - the catalytic core - and CF(0) - the membrane proton channel. CF(1) has five subunits: alpha(3), beta(3), gamma(1), delta(1), epsilon(1). CF(0) has three main subunits: a(1), b(2) and c(9-12). The alpha and beta chains form an alternating ring which encloses part of the gamma chain. CF(1) is attached to CF(0) by a central stalk formed by the gamma and epsilon chains, while a peripheral stalk is formed by the delta and b chains.

The protein localises to the cell inner membrane. The enzyme catalyses ATP + H2O + 4 H(+)(in) = ADP + phosphate + 5 H(+)(out). Produces ATP from ADP in the presence of a proton gradient across the membrane. The alpha chain is a regulatory subunit. The chain is ATP synthase subunit alpha from Cupriavidus pinatubonensis (strain JMP 134 / LMG 1197) (Cupriavidus necator (strain JMP 134)).